A 164-amino-acid polypeptide reads, in one-letter code: Endoribonuclease YbeY (164 aa).

Residues histidine 111, histidine 115, and histidine 121 each coordinate Zn(2+). A disordered region spans residues 142–164; that stretch reads GYPDPYADDETETSPTVTTKDSE. Over residues 154 to 164 the composition is skewed to polar residues; sequence TSPTVTTKDSE.

This sequence belongs to the endoribonuclease YbeY family. The cofactor is Zn(2+).

It localises to the cytoplasm. Its function is as follows. Single strand-specific metallo-endoribonuclease involved in late-stage 70S ribosome quality control and in maturation of the 3' terminus of the 16S rRNA. The polypeptide is Endoribonuclease YbeY (Pseudomonas fluorescens (strain Pf0-1)).